The chain runs to 258 residues: Imidazole glycerol phosphate synthase subunit HisF (258 aa).

Active-site residues include aspartate 11 and aspartate 130.

The protein belongs to the HisA/HisF family. Heterodimer of HisH and HisF.

It is found in the cytoplasm. It carries out the reaction 5-[(5-phospho-1-deoxy-D-ribulos-1-ylimino)methylamino]-1-(5-phospho-beta-D-ribosyl)imidazole-4-carboxamide + L-glutamine = D-erythro-1-(imidazol-4-yl)glycerol 3-phosphate + 5-amino-1-(5-phospho-beta-D-ribosyl)imidazole-4-carboxamide + L-glutamate + H(+). The protein operates within amino-acid biosynthesis; L-histidine biosynthesis; L-histidine from 5-phospho-alpha-D-ribose 1-diphosphate: step 5/9. In terms of biological role, IGPS catalyzes the conversion of PRFAR and glutamine to IGP, AICAR and glutamate. The HisF subunit catalyzes the cyclization activity that produces IGP and AICAR from PRFAR using the ammonia provided by the HisH subunit. This chain is Imidazole glycerol phosphate synthase subunit HisF, found in Rhodospirillum centenum (strain ATCC 51521 / SW).